A 542-amino-acid chain; its full sequence is Katanin p60 ATPase-containing subunit A-like 2 (542 aa).

The region spanning 25-57 is the LisH domain; it reads RRKNLLILIMHYLLQEGYMDSANSLEQETKISL. Disordered stretches follow at residues 94-126 and 142-168; these read LDHDSRVQSKPRSAGKLRRAGSNSTQGLPRIAQ and HAHQKALSRENSKQENGGNSPREASEI. A compositionally biased stretch (polar residues) spans 114-126; it reads GSNSTQGLPRIAQ. 298 to 305 provides a ligand contact to ATP; the sequence is GPPGTGKT.

Belongs to the AAA ATPase family. Katanin p60 subunit A1 subfamily. A-like 2 sub-subfamily.

Its subcellular location is the cytoplasm. The protein localises to the cytoskeleton. It localises to the spindle. The protein resides in the spindle pole. It carries out the reaction n ATP + n H2O + a microtubule = n ADP + n phosphate + (n+1) alpha/beta tubulin heterodimers.. Functionally, severs microtubules in vitro in an ATP-dependent manner. This activity may promote rapid reorganization of cellular microtubule arrays. The sequence is that of Katanin p60 ATPase-containing subunit A-like 2 (katnal2) from Xenopus tropicalis (Western clawed frog).